Here is a 122-residue protein sequence, read N- to C-terminus: LYR motif-containing protein 1 (122 aa).

This sequence belongs to the complex I LYR family. In terms of tissue distribution, high levels in adipose tissue.

It is found in the nucleus. May promote cell proliferation and inhibition of apoptosis of preadipocytes. This chain is LYR motif-containing protein 1 (LYRM1), found in Homo sapiens (Human).